A 172-amino-acid polypeptide reads, in one-letter code: L-methionine sulfoximine/L-methionine sulfone acetyltransferase (172 aa).

Residues Ala-3 to Asp-166 enclose the N-acetyltransferase domain. Substrate is bound by residues Arg-75–Phe-77 and Glu-85–Ser-87. Acetyl-CoA contacts are provided by residues Val-88–Val-90, Gly-96–Val-101, and Asn-127.

Homodimer.

It catalyses the reaction L-methionine sulfoximine + acetyl-CoA = N-acetyl-L-methionine sulfoximine + CoA + H(+). It carries out the reaction L-methionine sulfone + acetyl-CoA = N-acetyl-L-methionine sulfone + CoA + H(+). Functionally, plays a role in the resistance against the toxic effects of L-methionine sulfoximine (MSX), a rare amino acid, which inhibits glutamine synthetase (GlnA). Catalyzes the acetylation of L-methionine sulfoximine (MSX). The chain is L-methionine sulfoximine/L-methionine sulfone acetyltransferase from Pseudomonas aeruginosa (strain ATCC 15692 / DSM 22644 / CIP 104116 / JCM 14847 / LMG 12228 / 1C / PRS 101 / PAO1).